A 526-amino-acid chain; its full sequence is Vitamin B6 transporter bsu1 (526 aa).

The interval 1 to 53 is disordered; the sequence is MASKIASLFSPSETASKDQHENVAEDLELGTASSQSDGIHETNSEYDEKKREE. Over residues 38–53 the composition is skewed to basic and acidic residues; sequence GIHETNSEYDEKKREE. Helical transmembrane passes span 81-101, 118-138, 147-167, 173-192, 204-224, 238-257, 314-330, 349-366, 387-407, 413-432, 444-461, and 480-501; these read WSIVFMFCLMQIYVIWTSNGF, VATLCLSMNILGSGLGPMFLG, KPVYFCSIFVYTVFNISCALP, MIISHFIIGVAGSTALTNVA, AGVPMSLFVWACAGGAIGAPM, WLYYINIIVGGFFLIVILII, LYNFYAYGISYFFLTAI, YLSGFVASTLLFLYQPIQ, FTSALFITLLFPAGMFLFAFT, PWMSPIVGNSMVTVANGHNW, PLLSGSAVAAFTLPSFIG, and WAVATMAFISISIPFIIYTFYF.

Belongs to the major facilitator superfamily. CAR1 family.

The protein localises to the membrane. Functionally, thiamine-regulated, high affinity import carrier of pyridoxine, pyridoxal and pyridoxamine. Also imports, but does not export, amiloride and so confers sensitivity. In Schizosaccharomyces pombe (strain 972 / ATCC 24843) (Fission yeast), this protein is Vitamin B6 transporter bsu1 (bsu1).